We begin with the raw amino-acid sequence, 180 residues long: Superoxide dismutase [Cu-Zn] (180 aa).

An N-terminal signal peptide occupies residues 1 to 19 (MFMNLLSQVSNAIFPQVEA). Cu cation contacts are provided by H68, H70, and H85. Residues C79 and C171 are joined by a disulfide bond. Residues H85, H93, H102, and D105 each contribute to the Zn(2+) site. Cu cation is bound at residue H142.

The protein belongs to the Cu-Zn superoxide dismutase family. Homodimer. Cu cation is required as a cofactor. It depends on Zn(2+) as a cofactor.

The protein localises to the cytoplasm. It carries out the reaction 2 superoxide + 2 H(+) = H2O2 + O2. Functionally, destroys radicals which are normally produced within the cells and which are toxic to biological systems. Required for normal brood size. May be involved in regulating mpk-1 phosphorylation downstream of phosphatase ptp-2 during oocyte maturation. This chain is Superoxide dismutase [Cu-Zn], found in Caenorhabditis briggsae.